The primary structure comprises 1598 residues: Serine/threonine-protein kinase Nek1 (1598 aa).

One can recognise a Protein kinase domain in the interval 106 to 380 (YEVIRQIGAG…ALQCLGYTIF (275 aa)). ATP contacts are provided by residues 112–120 (IGAGRFGEV) and Lys-135. The active-site Proton acceptor is Asp-240.

It belongs to the protein kinase superfamily. NEK Ser/Thr protein kinase family. NIMA subfamily.

It localises to the cytoplasm. The protein resides in the cytoskeleton. The protein localises to the microtubule organizing center. Its subcellular location is the centrosome. It is found in the spindle pole. It catalyses the reaction L-seryl-[protein] + ATP = O-phospho-L-seryl-[protein] + ADP + H(+). It carries out the reaction L-threonyl-[protein] + ATP = O-phospho-L-threonyl-[protein] + ADP + H(+). Phosphorylation status of the T-loop (amino acids 267-293) modulates kinase activity and subcellular localization of the protein. In terms of biological role, probable serine/threonine-protein kinase. Involved in controlling centrosome splitting. Promotes separation of the centrosome outer cores. In Toxoplasma gondii (strain ATCC 50611 / Me49), this protein is Serine/threonine-protein kinase Nek1.